A 348-amino-acid chain; its full sequence is Succinylglutamate desuccinylase (348 aa).

Residues histidine 67, glutamate 70, and histidine 164 each coordinate Zn(2+). Residue glutamate 228 is part of the active site.

This sequence belongs to the AspA/AstE family. Succinylglutamate desuccinylase subfamily. Zn(2+) is required as a cofactor.

It carries out the reaction N-succinyl-L-glutamate + H2O = L-glutamate + succinate. Its pathway is amino-acid degradation; L-arginine degradation via AST pathway; L-glutamate and succinate from L-arginine: step 5/5. Functionally, transforms N(2)-succinylglutamate into succinate and glutamate. The sequence is that of Succinylglutamate desuccinylase from Shewanella denitrificans (strain OS217 / ATCC BAA-1090 / DSM 15013).